Reading from the N-terminus, the 69-residue chain is Large ribosomal subunit protein eL38 (69 aa).

It belongs to the eukaryotic ribosomal protein eL38 family.

In Solanum lycopersicum (Tomato), this protein is Large ribosomal subunit protein eL38 (RPL38).